Consider the following 156-residue polypeptide: Glutamate-rich protein 2 (156 aa).

Disordered stretches follow at residues 29 to 66 (LQDIDDKLSESAEDDGEDDTNDEDDDEDSNPKKNTQAP) and 116 to 156 (EKTQ…EDGS). 2 stretches are compositionally biased toward acidic residues: residues 39–56 (SAEDDGEDDTNDEDDDED) and 140–156 (SDEELSDESSDEGEDGS).

This Homo sapiens (Human) protein is Glutamate-rich protein 2 (ERICH2).